Consider the following 942-residue polypeptide: MSEYKDTLNLPETGFPMRGNLANREPEMLERWYKEDLYGEIRKAKKGKKSFVLHDGPPYANGDIHIGHALNKILKDIIIKSKTLSGFDAPYIPGWDCHGLPIELMVEKKVGKPGQKVTAAEFREKCREYAAGQVEGQKESFKRLGIMGEWDKPYRTMDFATEANIIRALGKIASNGHLLKGFKPVHWCTDCGSALAEAEVEYKDKVSPSIDVRFKTADEAALLSKFELTEGHEGKGDVSIVIWTTTPWTLPANRAVCLRDDLEYVLIQVEGDNPERIIVAAELAKDVMDRAGIEHFHNLGFAKGADLELSQFQHPFYDFTVPAILGDHVTTDSGTGVVHTAPGHGQEDFAVGQKYNLEVANPVGSNGVYLPDTELFAGQHVFKANDAVVETLKEKGALLHHHAYEHSYPHCWRHKTPIIFRATPQWFVSMDQAGLRAKALESIKGVQWMPEWGQSRIEGMIEGRPEWCISRQRTWGVPIALFVHKETAELHPNTLELIEKVAKLVEEKGIQAWWDVDAAELLGDEAEQYEKVLDTLDVWFDSGVTHFSVVDAREEYNGNSADLYLEGSDQHRGWFQSSLISSIAMKGVAPYKQVLTHGFVVDGHGRKMSKSIGNVVAPKDVTNKLGADILRLWVASTDYTGEVAVSDEILKRSADAYRRIRNTARFFLANLNGFNPATDIVPAEEMVALDRWAVGRALAAQEEIIKAYDEYNIHAVTQRLMQFCSIEMGSFYLDVIKDRQYTAKQGGHAQRSCQTALYYIVEALVRWMAPIMSFTADEIWNEMPGEREKFVFTGEWFDGLFGLAEGEELNNEFWTEIQKVRGAVNKLLEAARAEKTIGGALQAELTLFADDALAAKINKLEDELRFVLLTSAAAVKPLSEKSDAAQATDIEGLFVEVKATEAEKCDRCWHHTPDVGTIAGHEKICGRCVSNVDGKGEVRKFA.

Residues 58 to 68 carry the 'HIGH' region motif; it reads PYANGDIHIGH. L-isoleucyl-5'-AMP is bound at residue Glu566. The 'KMSKS' region motif lies at 607–611; that stretch reads KMSKS. Lys610 is a binding site for ATP. 4 residues coordinate Zn(2+): Cys905, Cys908, Cys925, and Cys928.

The protein belongs to the class-I aminoacyl-tRNA synthetase family. IleS type 1 subfamily. As to quaternary structure, monomer. Zn(2+) is required as a cofactor.

The protein localises to the cytoplasm. It catalyses the reaction tRNA(Ile) + L-isoleucine + ATP = L-isoleucyl-tRNA(Ile) + AMP + diphosphate. Functionally, catalyzes the attachment of isoleucine to tRNA(Ile). As IleRS can inadvertently accommodate and process structurally similar amino acids such as valine, to avoid such errors it has two additional distinct tRNA(Ile)-dependent editing activities. One activity is designated as 'pretransfer' editing and involves the hydrolysis of activated Val-AMP. The other activity is designated 'posttransfer' editing and involves deacylation of mischarged Val-tRNA(Ile). The sequence is that of Isoleucine--tRNA ligase from Vibrio parahaemolyticus serotype O3:K6 (strain RIMD 2210633).